The primary structure comprises 429 residues: Probable beta-1,3-galactosyl-O-glycosyl-glycoprotein beta-1,6-N-acetylglucosaminyltransferase 7 (429 aa).

The Cytoplasmic segment spans residues 1–8 (MSQLRATK). Residues 9–25 (PGILVCAAIGIFVFLYL) traverse the membrane as a helical; Signal-anchor for type II membrane protein segment. Topologically, residues 26 to 429 (RNPTSEDPEE…ESHLNRRLNP (404 aa)) are extracellular. 4 disulfide bridges follow: cysteine 53/cysteine 205, cysteine 139/cysteine 354, cysteine 160/cysteine 187, and cysteine 363/cysteine 394. N-linked (GlcNAc...) asparagine glycosylation is present at asparagine 87. N-linked (GlcNAc...) asparagine glycosylation is present at asparagine 272.

This sequence belongs to the glycosyltransferase 14 family.

The protein resides in the golgi apparatus membrane. It participates in protein modification; protein glycosylation. Probable glycosyltransferase. This Sus scrofa (Pig) protein is Probable beta-1,3-galactosyl-O-glycosyl-glycoprotein beta-1,6-N-acetylglucosaminyltransferase 7.